A 577-amino-acid polypeptide reads, in one-letter code: Phosphatidylinositol/phosphatidylcholine transfer protein SFH14 (577 aa).

The tract at residues 1–22 (MSGREQTGEKLSDSEYIEEEPR) is disordered. The region spanning 136-311 (ELDEVTRHYP…FLGGLCKCPN (176 aa)) is the CRAL-TRIO domain. Residues 364–383 (ETLKEEPEPEEYYSSTGSRS) are disordered. Residues 523 to 550 (EANEKLLAESLERIKSLELDLDKTKSVL) adopt a coiled-coil conformation.

This sequence belongs to the SFH family.

The protein localises to the golgi apparatus membrane. It is found in the cell membrane. In terms of biological role, required for transport of secretory proteins from the Golgi complex. Catalyzes the transfer of phosphatidylinositol and phosphatidylcholine between membranes in vitro. The chain is Phosphatidylinositol/phosphatidylcholine transfer protein SFH14 (SFH14) from Arabidopsis thaliana (Mouse-ear cress).